Consider the following 358-residue polypeptide: Neutral protease 2 homolog MGYG_02351 (358 aa).

A signal peptide spans 1–17 (MQFVALLAALGAPLALA). Residues 18-183 (ASIPAAHNNS…DSPAGVIDKR (166 aa)) constitute a propeptide that is removed on maturation. Cystine bridges form between Cys-191–Cys-260 and Cys-267–Cys-285. Residue His-309 participates in Zn(2+) binding. Residue Glu-310 is part of the active site. Residues His-313 and Asp-324 each coordinate Zn(2+).

This sequence belongs to the peptidase M35 family. Zn(2+) is required as a cofactor.

Its subcellular location is the secreted. It carries out the reaction Preferential cleavage of bonds with hydrophobic residues in P1'. Also 3-Asn-|-Gln-4 and 8-Gly-|-Ser-9 bonds in insulin B chain.. Secreted metalloproteinase that allows assimilation of proteinaceous substrates. Shows high activities on basic nuclear substrates such as histone and protamine. May be involved in virulence. The polypeptide is Neutral protease 2 homolog MGYG_02351 (Arthroderma gypseum (strain ATCC MYA-4604 / CBS 118893) (Microsporum gypseum)).